The following is a 612-amino-acid chain: Elongation factor 4 (612 aa).

The tr-type G domain maps to 11–193 (NHIRNFSIVA…KIVTDIPAPS (183 aa)). GTP is bound by residues 23-28 (DHGKST) and 140-143 (NKID).

It belongs to the TRAFAC class translation factor GTPase superfamily. Classic translation factor GTPase family. LepA subfamily.

It is found in the cell membrane. It carries out the reaction GTP + H2O = GDP + phosphate + H(+). Required for accurate and efficient protein synthesis under certain stress conditions. May act as a fidelity factor of the translation reaction, by catalyzing a one-codon backward translocation of tRNAs on improperly translocated ribosomes. Back-translocation proceeds from a post-translocation (POST) complex to a pre-translocation (PRE) complex, thus giving elongation factor G a second chance to translocate the tRNAs correctly. Binds to ribosomes in a GTP-dependent manner. The polypeptide is Elongation factor 4 (Lactobacillus acidophilus (strain ATCC 700396 / NCK56 / N2 / NCFM)).